We begin with the raw amino-acid sequence, 257 residues long: 5'-nucleotidase SurE (257 aa).

The a divalent metal cation site is built by D9, D10, S40, and N93.

The protein belongs to the SurE nucleotidase family. A divalent metal cation serves as cofactor.

It localises to the cytoplasm. It carries out the reaction a ribonucleoside 5'-phosphate + H2O = a ribonucleoside + phosphate. Its function is as follows. Nucleotidase that shows phosphatase activity on nucleoside 5'-monophosphates. This is 5'-nucleotidase SurE from Campylobacter hominis (strain ATCC BAA-381 / DSM 21671 / CCUG 45161 / LMG 19568 / NCTC 13146 / CH001A).